The primary structure comprises 442 residues: tRNA-2-methylthio-N(6)-dimethylallyladenosine synthase (442 aa).

The region spanning 6–122 (RKFYIHTFGC…LPALIAEAGD (117 aa)) is the MTTase N-terminal domain. [4Fe-4S] cluster is bound by residues Cys-15, Cys-51, Cys-85, Cys-157, Cys-161, and Cys-164. The 231-residue stretch at 143-373 (RTQSLNAFVP…IDLQNGISAE (231 aa)) folds into the Radical SAM core domain. The TRAM domain occupies 376-439 (GLAPGSVVEV…SATLFGQSAE (64 aa)).

The protein belongs to the methylthiotransferase family. MiaB subfamily. In terms of assembly, monomer. The cofactor is [4Fe-4S] cluster.

It localises to the cytoplasm. The catalysed reaction is N(6)-dimethylallyladenosine(37) in tRNA + (sulfur carrier)-SH + AH2 + 2 S-adenosyl-L-methionine = 2-methylsulfanyl-N(6)-dimethylallyladenosine(37) in tRNA + (sulfur carrier)-H + 5'-deoxyadenosine + L-methionine + A + S-adenosyl-L-homocysteine + 2 H(+). Catalyzes the methylthiolation of N6-(dimethylallyl)adenosine (i(6)A), leading to the formation of 2-methylthio-N6-(dimethylallyl)adenosine (ms(2)i(6)A) at position 37 in tRNAs that read codons beginning with uridine. In Chlorobium phaeobacteroides (strain DSM 266 / SMG 266 / 2430), this protein is tRNA-2-methylthio-N(6)-dimethylallyladenosine synthase.